Consider the following 373-residue polypeptide: MSNEAKKHARTTVAVLYGGQSTEHSVSCISAGAVIDHLDPEIYEVVPVGITEAGAWVPGTTDTSRLRADGRDMPRVEDGGVHVQLTFGGAGTAGSAGSGAAGEMRYVTGPQAGEVFAQVDVVFPVLHGVNGEDGTVQGVLDLAGVRYVGNGVLASAAGMDKDFTKRLAREAGIPVGEELILFQPRELTAEEKERLGLPVFVKPARGGSSIGISKVDSWEEFDAAIDLAFSNDNKVIVEAMIHGAEVECGVLQHADGSIVSSVPAMLNGTEDGAEGFYGFDAKYVDSTVSATIPAPLPAETIKEIRQLAIRTFNALGCDGIARVDFFATENGPVLNEINTMPGFTPISMYPKMFAAEGVSFGDLVSALIARALA.

The ATP-grasp domain occupies 165 to 369 (KRLAREAGIP…FGDLVSALIA (205 aa)). Position 192–247 (192–247 (KERLGLPVFVKPARGGSSIGISKVDSWEEFDAAIDLAFSNDNKVIVEAMIHGAEVE)) interacts with ATP. The Mg(2+) site is built by Asp-324, Glu-336, and Asn-338.

The protein belongs to the D-alanine--D-alanine ligase family. The cofactor is Mg(2+). It depends on Mn(2+) as a cofactor.

It localises to the cytoplasm. The enzyme catalyses 2 D-alanine + ATP = D-alanyl-D-alanine + ADP + phosphate + H(+). It functions in the pathway cell wall biogenesis; peptidoglycan biosynthesis. In terms of biological role, cell wall formation. The sequence is that of D-alanine--D-alanine ligase from Corynebacterium jeikeium (strain K411).